The following is a 287-amino-acid chain: rRNA adenine N-6-methyltransferase (287 aa).

A compositionally biased stretch (basic residues) spans 1 to 13 (MKKKNHKYRGKKL). Residues 1–21 (MKKKNHKYRGKKLNRGESPNF) form a disordered region. Positions 25, 27, 52, 73, 98, and 114 each coordinate S-adenosyl-L-methionine.

It belongs to the class I-like SAM-binding methyltransferase superfamily. rRNA adenine N(6)-methyltransferase family.

In terms of biological role, involved in erythromycin resistance. The polypeptide is rRNA adenine N-6-methyltransferase (ermD) (Bacillus licheniformis).